The sequence spans 210 residues: Na(+)-translocating NADH-quinone reductase subunit D (210 aa).

A run of 6 helical transmembrane segments spans residues P14–V34, L42–L62, I72–A92, V103–M123, F131–V151, and N178–I198.

The protein belongs to the NqrDE/RnfAE family. As to quaternary structure, composed of six subunits; NqrA, NqrB, NqrC, NqrD, NqrE and NqrF.

Its subcellular location is the cell inner membrane. The catalysed reaction is a ubiquinone + n Na(+)(in) + NADH + H(+) = a ubiquinol + n Na(+)(out) + NAD(+). Its function is as follows. NQR complex catalyzes the reduction of ubiquinone-1 to ubiquinol by two successive reactions, coupled with the transport of Na(+) ions from the cytoplasm to the periplasm. NqrA to NqrE are probably involved in the second step, the conversion of ubisemiquinone to ubiquinol. This Shewanella woodyi (strain ATCC 51908 / MS32) protein is Na(+)-translocating NADH-quinone reductase subunit D.